The following is a 442-amino-acid chain: F-box/FBD/LRR-repeat protein At3g14710 (442 aa).

The F-box domain maps to 26-73; it reads DKFSSLLESVVSIILSQLPTAEAVSTSVLSKSWKNIWTNITDLHFDDT. 3 LRR repeats span residues 126 to 147, 151 to 172, and 173 to 194; these read NLQR…SLFP, SLVE…AILP, and NLKF…SKNL. Residues 370 to 414 form the FBD domain; it reads VESPDCVTTMLKVLQIRNFKPNRLQISVLRYVLDNAEILGSVILS.

In Arabidopsis thaliana (Mouse-ear cress), this protein is F-box/FBD/LRR-repeat protein At3g14710.